The sequence spans 327 residues: 3' cyclic ADP-D-ribose synthase AaTIR (327 aa).

Residues 10–120 (VALSFAGENR…GILKTIGYIN (111 aa)) form a TIR domain region. Residue Lys229 is part of the active site.

As to quaternary structure, homodimer.

It carries out the reaction NADP(+) + H2O = ADP-D-ribose 2'-phosphate + nicotinamide + H(+). The enzyme catalyses NAD(+) = 3'cADPR + nicotinamide + H(+). Its function is as follows. NAD(+) hydrolase (NADase) that generates 3'cADPR, a cyclization variant of cyclic ADP-D-ribose (also called v2-cADPR). Also cleaves NADP(+), but does not cyclize the product. In Aquimarina amphilecti, this protein is 3' cyclic ADP-D-ribose synthase AaTIR.